We begin with the raw amino-acid sequence, 342 residues long: tRNA dimethylallyltransferase (342 aa).

The segment at 1–30 (MSANGPAAEPADGGRAVPAGGGEAVPAGGG) is disordered. Over residues 19 to 30 (AGGGEAVPAGGG) the composition is skewed to gly residues. Residue 49 to 56 (GPTAAGKS) coordinates ATP. Substrate is bound at residue 51–56 (TAAGKS). The tract at residues 74–77 (DSMQ) is interaction with substrate tRNA.

Belongs to the IPP transferase family. Monomer. It depends on Mg(2+) as a cofactor.

It catalyses the reaction adenosine(37) in tRNA + dimethylallyl diphosphate = N(6)-dimethylallyladenosine(37) in tRNA + diphosphate. In terms of biological role, catalyzes the transfer of a dimethylallyl group onto the adenine at position 37 in tRNAs that read codons beginning with uridine, leading to the formation of N6-(dimethylallyl)adenosine (i(6)A). In Salinispora arenicola (strain CNS-205), this protein is tRNA dimethylallyltransferase.